The chain runs to 202 residues: NAD(P)H dehydrogenase (quinone) (202 aa).

The region spanning 7 to 193 (VLVLYYSMYG…TIARFQGRHF (187 aa)) is the Flavodoxin-like domain. Residues 13 to 18 (SMYGHI) and 82 to 84 (TRF) each bind FMN. Y15 is a binding site for NAD(+). Residue W102 participates in substrate binding. FMN-binding positions include 117 to 122 (STATGG) and H137.

This sequence belongs to the WrbA family. Requires FMN as cofactor.

It catalyses the reaction a quinone + NADH + H(+) = a quinol + NAD(+). The catalysed reaction is a quinone + NADPH + H(+) = a quinol + NADP(+). This is NAD(P)H dehydrogenase (quinone) from Rhodospirillum rubrum (strain ATCC 11170 / ATH 1.1.1 / DSM 467 / LMG 4362 / NCIMB 8255 / S1).